Reading from the N-terminus, the 241-residue chain is Zinc finger CCHC domain-containing protein 24 (241 aa).

Ser65 and Ser93 each carry phosphoserine. The CCHC-type zinc-finger motif lies at 132 to 149 (YLCHLCFNKGHYIKDCPQ).

This chain is Zinc finger CCHC domain-containing protein 24, found in Mus musculus (Mouse).